The sequence spans 174 residues: Transgelin (174 aa).

The Calponin-homology (CH) domain occupies 3–109 (SQLEKEAREW…SIHSFSRYAA (107 aa)).

In terms of assembly, binds to actin.

It localises to the cytoplasm. Functionally, has actin-binding and actin-bundling activity and is a component of the actin patch. Stabilizes actin filaments against disassembly. Cross-links F-actin and is required for the formation of the contractile F-actin ring. The chain is Transgelin (stg1) from Schizosaccharomyces pombe (strain 972 / ATCC 24843) (Fission yeast).